The following is a 761-amino-acid chain: MPGIDKTDRAMTSVTAQEALDFHSQGRPGKLEISPTKPMATQRDLSLAYSPGVAVPVKAIADDPATAYDYTARGNMVAVISNGTAILGLGNLGALASKPVMEGKAVLFKRFADVDSIDLEVDTENVDEFVNCVRFLGPSFGGINLEDIKAPDCFIIEQRLREVMDIPVFHDDQHGTAIIAAAGLVNALTLTGRDFKTAKLVCNGAGAAAIACIELIKAMGFNPENIILCDTKGVIYKGRTDGMNQWKSAHAVETDRRTLAEALDGADVFFGLSAKGALSADMVRSMGARPIIFAMANPDPEITPEEVALIRDDAIVATGRSDYPNQVNNVLGFPYIFRGALDVRASTINDAMKIAAAEALANLAKEDVPDDVAAAYQGNRPRFGPQYIIPVPFDPRLISAIPMAVAKAAMETGVARKPIEDLKAYGQQLSARRDPIASTLQRIVERVRRQPKRIVFAEGEEVQMMRSAIAYANQQLGTALLLGREEVMRETAEREGIDLDRAGIQIVNARLSKRVGAYTDFLYSRLQRKGYLFRDVQRLINTDRNHFAASMVALGDADGMVTGLTRNYSTALEDVRRCIDPKPGHRVIGVSIALCRGRTVLVADTAVHDMPTSEELADIAEEAAGLAKRLGYVPRVAMLAYSTFGHPSGERSERVREAVKILDRRRVDFEYDGEMAADVALNARVMEQYPFCRLSGTANVLVMPAFHSASISTKMLQELGGSTVIGPLLVGLDKSVQIASMSAKDSDLVNLAAIAAYNAGT.

Positions 1–437 (MPGIDKTDRA…QLSARRDPIA (437 aa)) are malic enzyme. Tyrosine 49 acts as the Proton donor in catalysis. Catalysis depends on lysine 104, which acts as the Proton acceptor. 3 residues coordinate a divalent metal cation: glutamate 146, aspartate 147, and aspartate 172. Residues 205 to 208 (AGAA), asparagine 297, and asparagine 329 contribute to the NADP(+) site. Residues 438–761 (STLQRIVERV…AAIAAYNAGT (324 aa)) form a phosphate acetyltransferase region.

In the N-terminal section; belongs to the malic enzymes family. It in the C-terminal section; belongs to the phosphate acetyltransferase and butyryltransferase family. As to quaternary structure, homooctamer. Requires Mg(2+) as cofactor. It depends on Mn(2+) as a cofactor.

The enzyme catalyses (S)-malate + NADP(+) = pyruvate + CO2 + NADPH. The catalysed reaction is oxaloacetate + H(+) = pyruvate + CO2. This chain is NADP-dependent malic enzyme (tme), found in Rhizobium meliloti (strain 1021) (Ensifer meliloti).